Here is a 303-residue protein sequence, read N- to C-terminus: Diaminopimelate epimerase (303 aa).

Asn14 is a substrate binding site. Positions 60–74 (PVSSAGATADAAAGR) are enriched in low complexity. Residues 60–86 (PVSSAGATADAAAGRPPQPSAGRPPQP) are disordered. A compositionally biased stretch (pro residues) spans 75–86 (PPQPSAGRPPQP). Asn97 serves as a coordination point for substrate. The Proton donor role is filled by Cys106. Residues 107-108 (GN), Asn178, Asn209, and 227-228 (ER) each bind substrate. Cys236 functions as the Proton acceptor in the catalytic mechanism. 237-238 (GS) lines the substrate pocket.

It belongs to the diaminopimelate epimerase family. Homodimer.

The protein localises to the cytoplasm. The catalysed reaction is (2S,6S)-2,6-diaminopimelate = meso-2,6-diaminopimelate. Its pathway is amino-acid biosynthesis; L-lysine biosynthesis via DAP pathway; DL-2,6-diaminopimelate from LL-2,6-diaminopimelate: step 1/1. Its function is as follows. Catalyzes the stereoinversion of LL-2,6-diaminopimelate (L,L-DAP) to meso-diaminopimelate (meso-DAP), a precursor of L-lysine and an essential component of the bacterial peptidoglycan. In Acidothermus cellulolyticus (strain ATCC 43068 / DSM 8971 / 11B), this protein is Diaminopimelate epimerase.